The following is a 625-amino-acid chain: Probable potassium transport system protein Kup (625 aa).

Transmembrane regions (helical) follow at residues 10 to 30 (LAALTLAAVGIVYGDIGTSPL), 50 to 70 (LLGVVSLIVWGLIIIVSLKYV), 102 to 122 (YFPLMVMGLFGATLFYGDSVI), 135 to 155 (LGVATSAFDPYVVPVTVAILV), 172 to 192 (FGPVMLIWFITLAVMGVVNII), 214 to 234 (GFLAFIALGAVVLAFTGAEAL), 251 to 271 (FLIAFPALSLNYLGQGALLLL), 284 to 304 (LGAWSIYPLVALSTMAAIIAS), 340 to 360 (IYIPAVNWLQMIVVVLAVIGF), 369 to 389 (AYGIAVTATMMVTTVLTFFVI), 397 to 417 (LILCVAATGFFLVIDLSLFSA), and 422 to 442 (LFHGGWFPLLLGVVLFTLMLT).

The protein belongs to the HAK/KUP transporter (TC 2.A.72) family.

The protein localises to the cell inner membrane. The catalysed reaction is K(+)(in) + H(+)(in) = K(+)(out) + H(+)(out). Its function is as follows. Transport of potassium into the cell. Likely operates as a K(+):H(+) symporter. This Herminiimonas arsenicoxydans protein is Probable potassium transport system protein Kup.